Reading from the N-terminus, the 248-residue chain is Killer cell lectin-like receptor subfamily I member 2 (248 aa).

The Cytoplasmic segment spans residues 1–79; it reads MHKKKHIKHG…GIDPWLTTWQ (79 aa). Residues 19–44 are disordered; the sequence is IGTKSPTFQEKQRPSKTDQRSTVWRE. The span at 28-44 shows a compositional bias: basic and acidic residues; sequence EKQRPSKTDQRSTVWRE. Residues 80–100 traverse the membrane as a helical; Signal-anchor for type II membrane protein segment; that stretch reads MITVILATLCIILVTKVGFLI. The Extracellular portion of the chain corresponds to 101–248; sequence PSLFSKGEKQ…KKTYICEFNI (148 aa). Intrachain disulfides connect Cys132–Cys145, Cys161–Cys244, and Cys223–Cys236. Residues 139–245 form the C-type lectin domain; sequence FGNNFYCVFR…CSAKKTYICE (107 aa). Asn197, Asn214, and Asn220 each carry an N-linked (GlcNAc...) asparagine glycan.

In terms of assembly, heterodimer with KLRE1. As to expression, expressed in natural killer (NK) cells.

It is found in the cell membrane. In terms of biological role, lectin-like receptor for natural killer (NK) cells. Heterodimer formation with KLRE1 mediates NK cell cytolytic activity. This chain is Killer cell lectin-like receptor subfamily I member 2, found in Mus musculus (Mouse).